Here is a 610-residue protein sequence, read N- to C-terminus: Menin (610 aa).

An interaction with FANCD2 region spans residues 214–390 (GVAERSWLYL…SLLEAGEERP (177 aa)). The disordered stretch occupies residues 460–552 (REAEAAEAEE…SPPPEGPVLT (93 aa)). Residues 484-500 (RRESKPEEPPPPKKPAL) show a composition bias toward basic and acidic residues. Phosphoserine is present on residues Ser-487 and Ser-543. Phosphothreonine is present on Thr-594.

In terms of assembly, component of the MLL-HCF complex, at least composed of KMT2A/MLL1, MEN1, ASH2L, RBBP5, DPY30, WDR5, HCFC1 and HCFC2. Component of the menin-associated histone methyltransferase complex, at least composed of KMT2B/MLL4, MEN1, ASH2L, RBBP5, DPY30 and WDR5. Interacts with POLR2B. Interacts with POLR2A phosphorylated at 'Ser-5', but not with the unphosphorylated, nor 'Ser-2' phosphorylated POLR2A forms. Interacts with FANCD2 and DBF4. Interacts with SMAD3, but not with SMAD2, nor SMAD4. Directly interacts with NFKB1, NFKB2 and RELA. Interacts with JUND (via MBM motif); inhibits the interaction of JUND with MAPK10 and the phosphorylation of JUND by MAP kinases MAPK8 and MAPK10. Interacts with KMT2A (via MBM motif). The KMT2A-MEN1 complex interacts with PSIP1 with a greater affinity as MEN1 enhances interaction of KMT2A with PSIP1. In terms of tissue distribution, widely expressed, including in the pituitary, brain, large intestine, spleen, kidney, adrenal gland, ovary, testis, thymus, lung, epididymis, bone marrow, pancreatic islets and placenta.

It is found in the nucleus. Its function is as follows. Essential component of a MLL/SET1 histone methyltransferase (HMT) complex, a complex that specifically methylates 'Lys-4' of histone H3 (H3K4). Functions as a transcriptional regulator. Binds to the TERT promoter and represses telomerase expression. Represses JUND-mediated transcriptional activation on AP1 sites, as well as that mediated by NFKB subunit RELA. Positively regulates HOXC8 and HOXC6 gene expression. May be involved in normal hematopoiesis through the activation of HOXA9 expression. May be involved in DNA repair. Plays a role in TGFB1-mediated inhibition of cell-proliferation, possibly regulating SMAD3 transcriptional activity. The sequence is that of Menin (Men1) from Rattus norvegicus (Rat).